A 42-amino-acid chain; its full sequence is Profilin (42 aa).

This sequence belongs to the profilin family. In terms of assembly, occurs in many kinds of cells as a complex with monomeric actin in a 1:1 ratio.

It is found in the cytoplasm. The protein resides in the cytoskeleton. Its function is as follows. Binds to actin and affects the structure of the cytoskeleton. At high concentrations, profilin prevents the polymerization of actin, whereas it enhances it at low concentrations. The sequence is that of Profilin from Plantago lanceolata (English plantain).